A 323-amino-acid chain; its full sequence is Small ribosomal subunit protein uS3 (323 aa).

Residues 17–86 form the KH type-2 domain; that stretch reads IDEFFADELG…DPQIDVQEVD (70 aa). Residues 251-303 form a disordered region; the sequence is ADPGVSSEDEEVVTEPVDIGGDDEDVEDIEVVSDDSGNDTETVAEEVEELDAE. Acidic residues predominate over residues 270–303; the sequence is GGDDEDVEDIEVVSDDSGNDTETVAEEVEELDAE.

The protein belongs to the universal ribosomal protein uS3 family. In terms of assembly, part of the 30S ribosomal subunit.

Functionally, binds the lower part of the 30S subunit head. The chain is Small ribosomal subunit protein uS3 from Haloquadratum walsbyi (strain DSM 16790 / HBSQ001).